The chain runs to 948 residues: Coatomer subunit beta-2 (948 aa).

6 HEAT repeats span residues 49–87, 92–126, 127–164, 274–311, 312–349, and 391–428; these read ETIPQLFITIIRYVLPSEDHTIQKLLLLYLELIEKTDSK, PEMILICQNLRNNLQHPNEYIRGVTLRFLCRMKET, EIVEPLTPSVLQNLEHRHPFVRRNAILAIMSIYKLPHG, TAIRAAANTYCQLLLSQSDNNVKLILLDRLYELKTLHR, DIMVELIIDVLRALSSPNLDIRRKTLDIALDLITHHNI, and EVASTVVHLLMDFLGDSNVASALDVVVFVREIIETNPK.

In terms of assembly, oligomeric complex that consists of at least the alpha, beta, beta', gamma, delta, epsilon and zeta subunits.

Its subcellular location is the cytoplasm. It localises to the golgi apparatus membrane. The protein resides in the cytoplasmic vesicle. It is found in the COPI-coated vesicle membrane. Its function is as follows. The coatomer is a cytosolic protein complex that binds to dilysine motifs and reversibly associates with Golgi non-clathrin-coated vesicles, which further mediate biosynthetic protein transport from the ER, via the Golgi up to the trans Golgi network. Coatomer complex is required for budding from Golgi membranes, and is essential for the retrograde Golgi-to-ER transport of dilysine-tagged proteins. The protein is Coatomer subunit beta-2 of Arabidopsis thaliana (Mouse-ear cress).